Here is a 160-residue protein sequence, read N- to C-terminus: UPF0262 protein Mmar10_1128 (160 aa).

This sequence belongs to the UPF0262 family.

In Maricaulis maris (strain MCS10) (Caulobacter maris), this protein is UPF0262 protein Mmar10_1128.